Reading from the N-terminus, the 359-residue chain is Peptide chain release factor 1 (359 aa).

An N5-methylglutamine modification is found at Q233.

It belongs to the prokaryotic/mitochondrial release factor family. In terms of processing, methylated by PrmC. Methylation increases the termination efficiency of RF1.

The protein resides in the cytoplasm. Its function is as follows. Peptide chain release factor 1 directs the termination of translation in response to the peptide chain termination codons UAG and UAA. The polypeptide is Peptide chain release factor 1 (Ruminiclostridium cellulolyticum (strain ATCC 35319 / DSM 5812 / JCM 6584 / H10) (Clostridium cellulolyticum)).